Consider the following 178-residue polypeptide: Adenine phosphoribosyltransferase (178 aa).

Belongs to the purine/pyrimidine phosphoribosyltransferase family. In terms of assembly, homodimer.

The protein resides in the cytoplasm. It carries out the reaction AMP + diphosphate = 5-phospho-alpha-D-ribose 1-diphosphate + adenine. It participates in purine metabolism; AMP biosynthesis via salvage pathway; AMP from adenine: step 1/1. In terms of biological role, catalyzes a salvage reaction resulting in the formation of AMP, that is energically less costly than de novo synthesis. In Cereibacter sphaeroides (strain KD131 / KCTC 12085) (Rhodobacter sphaeroides), this protein is Adenine phosphoribosyltransferase.